We begin with the raw amino-acid sequence, 337 residues long: Fructose-1,6-bisphosphatase class 1 (337 aa).

Mg(2+)-binding residues include glutamate 94, aspartate 116, leucine 118, and aspartate 119. Residues 119-122 (DGSS), asparagine 210, and lysine 276 contribute to the substrate site. Glutamate 282 is a binding site for Mg(2+).

Belongs to the FBPase class 1 family. As to quaternary structure, homotetramer. Mg(2+) is required as a cofactor.

It localises to the cytoplasm. It carries out the reaction beta-D-fructose 1,6-bisphosphate + H2O = beta-D-fructose 6-phosphate + phosphate. The protein operates within carbohydrate biosynthesis; gluconeogenesis. This chain is Fructose-1,6-bisphosphatase class 1, found in Burkholderia cenocepacia (strain HI2424).